The following is a 694-amino-acid chain: Elongation factor G (694 aa).

Positions 9–288 constitute a tr-type G domain; the sequence is SKIRNIGIMA…VIVKWLPSPK (280 aa). Residues 18–25, 82–86, and 136–139 each bind GTP; these read AHIDAGKT, DTPGH, and NKMD.

This sequence belongs to the TRAFAC class translation factor GTPase superfamily. Classic translation factor GTPase family. EF-G/EF-2 subfamily.

Its subcellular location is the cytoplasm. In terms of biological role, catalyzes the GTP-dependent ribosomal translocation step during translation elongation. During this step, the ribosome changes from the pre-translocational (PRE) to the post-translocational (POST) state as the newly formed A-site-bound peptidyl-tRNA and P-site-bound deacylated tRNA move to the P and E sites, respectively. Catalyzes the coordinated movement of the two tRNA molecules, the mRNA and conformational changes in the ribosome. The polypeptide is Elongation factor G (Chlamydia caviae (strain ATCC VR-813 / DSM 19441 / 03DC25 / GPIC) (Chlamydophila caviae)).